The sequence spans 910 residues: ZZ-type zinc finger-containing protein 3 (910 aa).

Disordered regions lie at residues 41–117 (AHPE…RQAE) and 133–153 (EATNSSEEDSPVKPDKEPGEH). The span at 67–84 (QKGTNNGRTSDVRQQSAR) shows a compositional bias: polar residues. Residues Ser89, Ser96, Ser137, Ser138, and Ser142 each carry the phosphoserine modification. The segment covering 96–116 (SSSEKDDLERQALESCERRQA) has biased composition (basic and acidic residues). The span at 142-153 (SPVKPDKEPGEH) shows a compositional bias: basic and acidic residues. Lys283 participates in a covalent cross-link: Glycyl lysine isopeptide (Lys-Gly) (interchain with G-Cter in SUMO2). Disordered regions lie at residues 303 to 358 (TAES…VSGE), 373 to 444 (TSLS…PQDG), and 609 to 641 (ARPKSPLDPKKDGESLSYSMLPLSDGPEGSHNR). Composition is skewed to polar residues over residues 331-347 (SSASKEQCNENSSNPLD) and 397-434 (SSPTKTTSPYRENGQLEETNLSPQETNTTVSDHVSESP). An N6-acetyllysine modification is found at Lys401. Ser613 carries the phosphoserine modification. The segment covering 613–622 (SPLDPKKDGE) has biased composition (basic and acidic residues). A Glycyl lysine isopeptide (Lys-Gly) (interchain with G-Cter in SUMO2) cross-link involves residue Lys654. The HTH myb-type domain maps to 654 to 714 (KPETFNQLWT…RVQKYFIKLT (61 aa)). The H-T-H motif DNA-binding region spans 687–710 (WQKIADELGNRTAKQVASRVQKYF). The residue at position 708 (Lys708) is an N6-acetyllysine. Lys715 is covalently cross-linked (Glycyl lysine isopeptide (Lys-Gly) (interchain with G-Cter in SUMO2)). The segment at 825-884 (HVGFKCDNCGVEPIQGVRWHCQDCPPEMSLDFCDSCSDCPHETDIHKEDHQLEPVYKSET) adopts a ZZ-type zinc-finger fold. Residues Cys830, Cys833, Cys845, Cys848, Cys857, Cys860, His870, and His874 each coordinate Zn(2+).

Component of the ADA2A-containing complex (ATAC), composed of KAT14, KAT2A, TADA2L, TADA3L, ZZ3, MBIP, WDR5, YEATS2, CCDC101 and DR1. Interacts via (ZZ-type zinc finger) with histone H3 in a methylation-independent manner and acetylation on 'Lys-4' (H3K4ac) moderately enhances the interaction.

Its subcellular location is the nucleus. Functionally, histone H3 reader that is required for the ATAC complex-mediated maintenance of histone acetylation and gene activation. Component of the ATAC complex, a complex with histone acetyltransferase activity on histones H3 and H4. This chain is ZZ-type zinc finger-containing protein 3 (Zzz3), found in Mus musculus (Mouse).